The sequence spans 292 residues: MIAGSMVALVTPMDAQGRLDWDSLSKLVDFHLQEGTNAIVAVGTTGESATLDVSEHIEVIRRVVAQVAGRIPVIAGTGANSTREAVELTTNAKTAGADACLLVTPYYNKPTQEGLFQHFSHIANAVDIPQILYNVPGRTACDMLPETVARLSTVKNIIGIKEATGNLQRAKDILASVSSDFLVYSGDDATAVELMLLGGKGNISVTANVAPRLMSDLCAAAMRGDAETARAIHEKLMPLNNTLFIESNPIPVKWALHEMGKMPAGIRLPLTWLSEACHEPLRQALRQSGVLV.

Residue threonine 45 coordinates pyruvate. The active-site Proton donor/acceptor is the tyrosine 133. The active-site Schiff-base intermediate with substrate is lysine 161. Position 203 (isoleucine 203) interacts with pyruvate.

Belongs to the DapA family. As to quaternary structure, homodimer.

Its subcellular location is the cytoplasm. It catalyses the reaction L-aspartate 4-semialdehyde + pyruvate = (2S,4S)-4-hydroxy-2,3,4,5-tetrahydrodipicolinate + H2O + H(+). Its pathway is amino-acid biosynthesis; L-lysine biosynthesis via DAP pathway; (S)-tetrahydrodipicolinate from L-aspartate: step 3/4. In terms of biological role, catalyzes the condensation of (S)-aspartate-beta-semialdehyde [(S)-ASA] and pyruvate to 4-hydroxy-tetrahydrodipicolinate (HTPA). This chain is 4-hydroxy-tetrahydrodipicolinate synthase, found in Pseudomonas savastanoi pv. phaseolicola (strain 1448A / Race 6) (Pseudomonas syringae pv. phaseolicola (strain 1448A / Race 6)).